Consider the following 516-residue polypeptide: MAAAWLVVLLTVHRLLHLSGVSAVDRSQFPPDFLFGTSSSAYQVEGGYLEGNKGLSNWDVFTHKQGTIEDGSNGDTANDHYHRYMEDIELMHSLGVNSYRFSISWARILPKGRFGDVNPDGVAFYNALIDGLVQKGIQPFVTICHYDIPHELDERYGGWLSPEIQKDFSYFAEVCFKLFGDRIKFWTTFNQPNLSIKFSYMDGFYSPGRCSEPFGKCALGNSSIEPYVAGHNIILSHANAVSVYRNKYQGKQGGQIGIALSITWYEPFRNTTIDLLAVKRALSFGASWFLDPILLGDYPTEMREVLGQSLPKFTSKQKNRLQSTKLDFIGLNHYTTCYVKDCIFSPCEIDPVNADARVFSLYERDGVPIGKATGAPFFHDVPRGMEEAVTYYKQRYNNTPTYITENGYSQASNSNMTAKDFTNDTGRITYIQGYLISLASAIRKGADVRGYFVWSLLDDFEWNFGYTLRFGLYHVHYKTLKRTPKLSVDWYRKFLTGSLLRRKFRDESQLHKFNSY.

The N-terminal stretch at 1–23 (MAAAWLVVLLTVHRLLHLSGVSA) is a signal peptide. Residues Gln43, His145, and 190–191 (NQ) each bind a beta-D-glucoside. Asn193 is a glycosylation site (N-linked (GlcNAc...) asparagine). A disulfide bond links Cys210 and Cys217. N-linked (GlcNAc...) asparagine glycans are attached at residues Asn221 and Asn270. Tyr334 contributes to the a beta-D-glucoside binding site. Cysteines 342 and 347 form a disulfide. Glu405 serves as a coordination point for a beta-D-glucoside. The active-site Nucleophile is the Glu405. Residues Asn415 and Asn423 are each glycosylated (N-linked (GlcNAc...) asparagine). A beta-D-glucoside contacts are provided by residues Trp454, 461-462 (EW), and Phe470.

It belongs to the glycosyl hydrolase 1 family. In terms of tissue distribution, expressed in flowers and endosperm.

In Oryza sativa subsp. japonica (Rice), this protein is Probable inactive beta-glucosidase 14.